Consider the following 540-residue polypeptide: 2-isopropylmalate synthase (540 aa).

The 262-residue stretch at 8-269 (VLIFDTTLRD…YFNPFFGRAE (262 aa)) folds into the Pyruvate carboxyltransferase domain. Positions 17, 208, 210, and 244 each coordinate Mn(2+). The interval 408-540 (QLKLVQVSCG…ATPLDASPTL (133 aa)) is regulatory domain.

The protein belongs to the alpha-IPM synthase/homocitrate synthase family. LeuA type 1 subfamily. Homodimer. The cofactor is Mn(2+).

Its subcellular location is the cytoplasm. The enzyme catalyses 3-methyl-2-oxobutanoate + acetyl-CoA + H2O = (2S)-2-isopropylmalate + CoA + H(+). It functions in the pathway amino-acid biosynthesis; L-leucine biosynthesis; L-leucine from 3-methyl-2-oxobutanoate: step 1/4. Functionally, catalyzes the condensation of the acetyl group of acetyl-CoA with 3-methyl-2-oxobutanoate (2-ketoisovalerate) to form 3-carboxy-3-hydroxy-4-methylpentanoate (2-isopropylmalate). The sequence is that of 2-isopropylmalate synthase from Synechococcus sp. (strain WH7803).